A 210-amino-acid polypeptide reads, in one-letter code: MLMFSRFRYIFFAVALLSGPVCAGARADLSAFTRGLKTLQGHFSQEVIDTQGRVKERSNGTVALSLPNLLRWECDAPYKQLVVADGKRVWLFDPDLNQASVLLQDNEERNSPLIALIDPIQLDRKYDVSEEVAMRDGLRWLSLRPRGSTEASFQSASFGFSQTQLARMELVDNLGQRTVIAFSGWQRNPVFAVNTFRFTPGKNVDVIGDR.

Residues 1–23 (MLMFSRFRYIFFAVALLSGPVCA) form the signal peptide.

The protein belongs to the LolA family. As to quaternary structure, monomer.

The protein localises to the periplasm. In terms of biological role, participates in the translocation of lipoproteins from the inner membrane to the outer membrane. Only forms a complex with a lipoprotein if the residue after the N-terminal Cys is not an aspartate (The Asp acts as a targeting signal to indicate that the lipoprotein should stay in the inner membrane). The protein is Outer-membrane lipoprotein carrier protein of Xylella fastidiosa (strain Temecula1 / ATCC 700964).